The sequence spans 387 residues: MSSGKILPRRQAVPVLYTRGTHYEVGFDMGRTFGSMIKNFLILSKPLNETYLPLYQSPKGRQIYNETLGSVKDSFPQYVRELEGVADGAEVEFHKLFLLHLDEILPQALKHQPRSKNQPTGCSTIIVNQKNCRLLGHTEDALTETLNHYYFVVAHIISDKPQGKYNVKEEHFMSLCYAGHLPGYTMSHNHHGLVFSINTISAELLRSGKTPRHFITRALLATSNVDDAFRVLKDAGVGAADACSINFTFLADPRQMCYNVEMAPSPDRKNESHLNIKEVPLGEHNYHVNQFDRIRQDQANDLMISSSISRMQTFGAYNPPMSEQDVRHMLGDVSGGVYCVWRENNSCDEVVKTIAVGIFDLSARTISLYSDNPSETEPHCRLPLLYK.

This sequence belongs to the peptidase C45 family. In terms of assembly, the unprocessed protein forms homodimers. May form heterodimers composed of a 15 kDa alpha subunit and a 30 kDa beta subunit. The protein is synthesized as a 43 kDa precursor which is then self-processed into a 15 kDa alpha subunit and a 30 kDa beta subunit. Processing appears to be necessary for beta-alanyl-dopamine/carcinine hydrolase activity. The beta subunit carries the beta-alanyl-dopamine/carcinine hydrolase activity. In terms of tissue distribution, expressed in body, head, optic lobes and retina (at protein level). Expressed in photoreceptor cells R1-R6 in the lamina and in photoreceptor cells R7 and R8 in the medulla (at protein level).

It localises to the cell projection. The protein resides in the axon. The protein localises to the cytoplasm. The enzyme catalyses carcinine + H2O = histamine + beta-alanine. It catalyses the reaction beta-alanyl-dopamine + H2O = dopamine + beta-alanine. Its function is as follows. In the cuticle, catalyzes the hydrolysis of beta-alanyl-dopamine releasing dopamine and beta-alanine; dopamine is a metabolite involved in the pigmentation and sclerotization of the insect cuticle. In the photoreceptor cells, catalyzes the hydrolysis of carcinine releasing histamine and beta-alanine contributing to the recycling of the neurotransmitter histamine in the optical nerve system. Also, regulates the cuticular hydrocarbon composition in females. The sequence is that of Beta-alanyl-dopamine/carcinine hydrolase from Drosophila melanogaster (Fruit fly).